A 408-amino-acid polypeptide reads, in one-letter code: Elongation factor Tu (408 aa).

One can recognise a tr-type G domain in the interval 10–219; it reads KTHVNVGTIG…ALDTYIPDPV (210 aa). Residues 19–26, 88–92, and 143–146 contribute to the GTP site; these read GHVDHGKT, DCPGH, and NKCD. A Mg(2+)-binding site is contributed by T26.

Belongs to the TRAFAC class translation factor GTPase superfamily. Classic translation factor GTPase family. EF-Tu/EF-1A subfamily. In terms of assembly, monomer.

Its subcellular location is the cytoplasm. The catalysed reaction is GTP + H2O = GDP + phosphate + H(+). Functionally, GTP hydrolase that promotes the GTP-dependent binding of aminoacyl-tRNA to the A-site of ribosomes during protein biosynthesis. The protein is Elongation factor Tu of Brachyspira hyodysenteriae (strain ATCC 49526 / WA1).